A 441-amino-acid chain; its full sequence is 4-hydroxybenzoate polyprenyltransferase, mitochondrial (441 aa).

The transit peptide at 1-95 (MLRKLTSNSS…TLGELVLRDY (95 aa)) directs the protein to the mitochondrion. 8 consecutive transmembrane segments (helical) span residues 129–149 (IGSW…APAG), 154–174 (LWTL…GCTI), 204–224 (AWFF…ELNW), 225–245 (YSIV…LMKR), 246–266 (ITHW…LLGW), 271–291 (GSVM…WTIV), 322–342 (LWLS…GMVC), and 378–398 (FISN…GTLY). Residues 405-441 (AGKSSTTSSSSTSSSSSPSSGLLLAATNHHQPARQAS) are disordered. Residues 408 to 424 (SSTTSSSSTSSSSSPSS) are compositionally biased toward low complexity. The segment covering 432–441 (NHHQPARQAS) has biased composition (polar residues).

This sequence belongs to the UbiA prenyltransferase family. Mg(2+) is required as a cofactor.

It localises to the mitochondrion inner membrane. The catalysed reaction is an all-trans-polyprenyl diphosphate + 4-hydroxybenzoate = a 4-hydroxy-3-(all-trans-polyprenyl)benzoate + diphosphate. Its pathway is cofactor biosynthesis; ubiquinone biosynthesis. Catalyzes the prenylation of para-hydroxybenzoate (PHB) with an all-trans polyprenyl group. Mediates the second step in the final reaction sequence of coenzyme Q (CoQ) biosynthesis, which is the condensation of the polyisoprenoid side chain with PHB, generating the first membrane-bound Q intermediate. The polypeptide is 4-hydroxybenzoate polyprenyltransferase, mitochondrial (Aedes aegypti (Yellowfever mosquito)).